Here is a 782-residue protein sequence, read N- to C-terminus: Translation initiation factor IF-2 (782 aa).

The disordered stretch occupies residues 47 to 196; it reads DNAIDGTNKK…TPPKPKELPE (150 aa). Residues 53–65 show a composition bias toward basic and acidic residues; sequence TNKKAEAPKKETT. Over residues 66 to 81 the composition is skewed to polar residues; that stretch reads SNENGNSKGPNKPNMT. Low complexity-rich tracts occupy residues 82-93 and 118-170; these read NSNEKSNKPNNP and NTSK…NNKG. Residues 283 to 452 form the tr-type G domain; sequence ERPPVVTIMG…LLVSEVEELK (170 aa). A G1 region spans residues 292–299; sequence GHVDHGKT. 292–299 serves as a coordination point for GTP; sequence GHVDHGKT. The G2 stretch occupies residues 317 to 321; it reads GITQH. A G3 region spans residues 338–341; sequence DTPG. Residues 338–342 and 392–395 each bind GTP; these read DTPGH and NKID. The G4 stretch occupies residues 392-395; the sequence is NKID. A G5 region spans residues 428–430; sequence SAK.

This sequence belongs to the TRAFAC class translation factor GTPase superfamily. Classic translation factor GTPase family. IF-2 subfamily.

Its subcellular location is the cytoplasm. Functionally, one of the essential components for the initiation of protein synthesis. Protects formylmethionyl-tRNA from spontaneous hydrolysis and promotes its binding to the 30S ribosomal subunits. Also involved in the hydrolysis of GTP during the formation of the 70S ribosomal complex. This chain is Translation initiation factor IF-2, found in Listeria monocytogenes serotype 4b (strain CLIP80459).